Here is a 688-residue protein sequence, read N- to C-terminus: Probable glucan endo-1,3-beta-glucosidase btgC (688 aa).

3 disordered regions span residues 1 to 49 (MSGP…MNGQ), 61 to 91 (DGRQ…NLGP), and 169 to 194 (QLTP…DIPY). At 1–307 (MSGPNRTYSF…PKPGGGNKKR (307 aa)) the chain is on the cytoplasmic side. Over residues 175 to 188 (SVSHLSSTNPSQRN) the composition is skewed to polar residues. The helical; Signal-anchor for type II membrane protein transmembrane segment at 308 to 328 (GWIVGAILAFIIIGAIVGGAV) threads the bilayer. The Extracellular segment spans residues 329–688 (GGTIGHRGNE…IPDCGGKTAT (360 aa)). The tract at residues 334–363 (HRGNEEPSSASSASSSSTQTATEDTSVNGD) is disordered. Residues 341–355 (SSASSASSSSTQTAT) are compositionally biased toward low complexity. 3 N-linked (GlcNAc...) asparagine glycosylation sites follow: asparagine 408, asparagine 431, and asparagine 459. Residue glutamate 491 is the Proton donor of the active site. Glutamate 590 acts as the Nucleophile in catalysis. N-linked (GlcNAc...) asparagine glycans are attached at residues asparagine 609 and asparagine 635.

The protein belongs to the glycosyl hydrolase 17 family.

It localises to the cell membrane. It catalyses the reaction Hydrolysis of (1-&gt;3)-beta-D-glucosidic linkages in (1-&gt;3)-beta-D-glucans.. Its function is as follows. Glucanases play a role in cell expansion during growth, in cell-cell fusion during mating, and in spore release during sporulation. This enzyme may be involved in beta-glucan degradation. Active on laminarin and lichenan. This Aspergillus fumigatus (strain CBS 144.89 / FGSC A1163 / CEA10) (Neosartorya fumigata) protein is Probable glucan endo-1,3-beta-glucosidase btgC (btgC).